The following is a 320-amino-acid chain: MAGKLQDGVAIAKIKETINLFCEYSFGDLVNNRREIVGRVHDARKNAALAWPDLIMNCFLHSASHYGVVKFLLDIALSTRFGDFTLLGVSSQNYPFYDLHVVMTKAFCNLDFAKDEYLMINDSFSSMMSAFLDEEGVHSAMSMELGIHDIEDRFVLRTKRLFYIIHEYHMSLDEIEPWLEKLPDASGGTLLNQKSKEQMRVIFSNAKVRIANSINLYVTTHTNSYNEYVREVAEYVADLWNIQTTTNTQGHENELAAEDFGVLASSSQMNGTKSELGDSVIKSDGNEVKLEPAMFTRNDDEEELAGSEFTSLLSDDGRMG.

Residues 297–320 (RNDDEEELAGSEFTSLLSDDGRMG) are disordered.

The protein belongs to the phytoreovirus minor outer capsid protein P9 family.

It is found in the virion. The protein localises to the host cytoplasm. Its function is as follows. Minor outer capsid protein. The protein is Minor outer capsid protein P9 of Rice gall dwarf virus (RGDV).